We begin with the raw amino-acid sequence, 273 residues long: Phosphatidylglycerol--prolipoprotein diacylglyceryl transferase (273 aa).

The next 4 membrane-spanning stretches (helical) occupy residues 18-38, 47-67, 89-109, and 116-136; these read IPVRWYGLLIVSGIILAYVVG, LPEDFLADLLLWAVPISIICA, IWNGGIAIHGALIGAFVTAYI, and VSFLRVADIAAPSILIGQIIG. Residue arginine 137 participates in a 1,2-diacyl-sn-glycero-3-phospho-(1'-sn-glycerol) binding. Transmembrane regions (helical) follow at residues 178-198, 207-227, and 238-258; these read VHPTFLYESVWNLIGLIILLI, GEIFFSYLIWYSIGRFYIEGM, and LRSAQIVSIIGIVVGLGAIIY.

The protein belongs to the Lgt family.

The protein localises to the cell membrane. The enzyme catalyses L-cysteinyl-[prolipoprotein] + a 1,2-diacyl-sn-glycero-3-phospho-(1'-sn-glycerol) = an S-1,2-diacyl-sn-glyceryl-L-cysteinyl-[prolipoprotein] + sn-glycerol 1-phosphate + H(+). Its pathway is protein modification; lipoprotein biosynthesis (diacylglyceryl transfer). Functionally, catalyzes the transfer of the diacylglyceryl group from phosphatidylglycerol to the sulfhydryl group of the N-terminal cysteine of a prolipoprotein, the first step in the formation of mature lipoproteins. This is Phosphatidylglycerol--prolipoprotein diacylglyceryl transferase from Lysinibacillus sphaericus (strain C3-41).